Here is a 1008-residue protein sequence, read N- to C-terminus: Retinoblastoma-related protein (1008 aa).

Positions 375–394 are disordered; sequence KRKVDSMTSPTKTITSPLSP. The span at 380-392 shows a compositional bias: polar residues; sequence SMTSPTKTITSPL. Residues 404 to 605 form a domain A region; the sequence is TPVSTAMTTA…EKGSSMYNSL (202 aa). A pocket region spans residues 404–853; the sequence is TPVSTAMTTA…NEVFIPSVKP (450 aa). Residues 606–722 are spacer; sequence TIARPNLSNE…HPTRGETCGE (117 aa). Positions 723-853 are domain B; it reads TAVNLFFSKI…NEVFIPSVKP (131 aa). Disordered regions lie at residues 865-899 and 988-1008; these read KNPN…SLPD and LQNG…LKTE.

Belongs to the retinoblastoma protein (RB) family.

It localises to the nucleus. In terms of biological role, regulator of biological processes that recruits a histone deacetylase to control gene transcription. May play a role in the entry into mitosis, negatively regulating the cell proliferation. Formation of stable complexes with geminiviridae replication-associated proteins may create a cellular environment which favors viral DNA replication. This chain is Retinoblastoma-related protein (RBR), found in Pilosella officinarum (Mouse-ear hawkweed).